We begin with the raw amino-acid sequence, 218 residues long: Monomethylamine corrinoid protein 1 (218 aa).

One can recognise a B12-binding N-terminal domain in the interval Met-1–Glu-91. The B12-binding domain maps to Thr-94–Lys-218. His-107 provides a ligand contact to methylcob(III)alamin.

Belongs to the methylamine corrinoid protein family. In terms of assembly, can form a complex with MtmB.

It participates in one-carbon metabolism; methanogenesis from methylamine. Acts as a methyl group carrier between MtmB and MtbA. The chain is Monomethylamine corrinoid protein 1 (mtmC1) from Methanosarcina acetivorans (strain ATCC 35395 / DSM 2834 / JCM 12185 / C2A).